Reading from the N-terminus, the 160-residue chain is Cytochrome b6-f complex subunit 4 (160 aa).

3 helical membrane passes run 36 to 56 (LLYIFPVVILGTIACNVGLAV), 95 to 115 (LLGVLLMVSVPAGLLTVPFLE), and 131 to 151 (TVFLIGTAVALWLGIGATLPI).

It belongs to the cytochrome b family. PetD subfamily. The 4 large subunits of the cytochrome b6-f complex are cytochrome b6, subunit IV (17 kDa polypeptide, petD), cytochrome f and the Rieske protein, while the 4 small subunits are petG, petL, petM and petN. The complex functions as a dimer.

It localises to the plastid. Its subcellular location is the chloroplast thylakoid membrane. Functionally, component of the cytochrome b6-f complex, which mediates electron transfer between photosystem II (PSII) and photosystem I (PSI), cyclic electron flow around PSI, and state transitions. The chain is Cytochrome b6-f complex subunit 4 from Solanum tuberosum (Potato).